Here is a 412-residue protein sequence, read N- to C-terminus: Pyruvate dehydrogenase E1 component subunit alpha, mitochondrial (412 aa).

Residues histidine 104, tyrosine 130, arginine 131, alanine 169, glycine 177, valine 179, aspartate 208, glycine 209, alanine 210, asparagine 237, and tyrosine 239 each coordinate pyruvate. Thiamine diphosphate is bound by residues tyrosine 130 and arginine 131. Thiamine diphosphate contacts are provided by glycine 177, valine 179, aspartate 208, glycine 209, alanine 210, and asparagine 237. Mg(2+) is bound at residue aspartate 208. The Mg(2+) site is built by asparagine 237 and tyrosine 239. Histidine 304 lines the thiamine diphosphate pocket.

Tetramer of 2 alpha and 2 beta subunits. Requires thiamine diphosphate as cofactor. Mg(2+) serves as cofactor.

Its subcellular location is the mitochondrion matrix. The enzyme catalyses N(6)-[(R)-lipoyl]-L-lysyl-[protein] + pyruvate + H(+) = N(6)-[(R)-S(8)-acetyldihydrolipoyl]-L-lysyl-[protein] + CO2. Its activity is regulated as follows. E1 activity is regulated by phosphorylation (inactivation) and dephosphorylation (activation) of the alpha subunit. In terms of biological role, the pyruvate dehydrogenase complex catalyzes the overall conversion of pyruvate to acetyl-CoA and CO(2). It contains multiple copies of three enzymatic components: pyruvate dehydrogenase (E1), dihydrolipoamide acetyltransferase (E2) and lipoamide dehydrogenase (E3). The protein is Pyruvate dehydrogenase E1 component subunit alpha, mitochondrial (PDA1) of Kluyveromyces lactis (strain ATCC 8585 / CBS 2359 / DSM 70799 / NBRC 1267 / NRRL Y-1140 / WM37) (Yeast).